A 102-amino-acid chain; its full sequence is Small ribosomal subunit protein uS10 (102 aa).

It belongs to the universal ribosomal protein uS10 family. Part of the 30S ribosomal subunit.

In terms of biological role, involved in the binding of tRNA to the ribosomes. This chain is Small ribosomal subunit protein uS10, found in Geobacter sulfurreducens (strain ATCC 51573 / DSM 12127 / PCA).